The following is a 675-amino-acid chain: Acetyl-coenzyme A synthetase 2 (675 aa).

CoA contacts are provided by residues 206–209 and Thr325; that span reads RGGK. ATP contacts are provided by residues 401-403, 425-430, Asp516, and Arg531; these read GEP and DTMWQT. Ser539 contributes to the CoA binding site. Position 542 (Arg542) interacts with ATP. Arg604 serves as a coordination point for CoA.

It belongs to the ATP-dependent AMP-binding enzyme family.

The catalysed reaction is acetate + ATP + CoA = acetyl-CoA + AMP + diphosphate. The chain is Acetyl-coenzyme A synthetase 2 (ACS2) from Zygosaccharomyces bailii.